Reading from the N-terminus, the 290-residue chain is Protein translocase subunit SecF (290 aa).

The next 6 helical transmembrane spans lie at 15-35 (VFMI…FTKG), 131-151 (KAIL…TVRF), 156-176 (AISA…IFAI), 184-204 (SFIA…IIVF), 234-256 (TLYT…GVVL), and 260-282 (ILAI…SAIL).

This sequence belongs to the SecD/SecF family. SecF subfamily. Forms a complex with SecD. Part of the essential Sec protein translocation apparatus which comprises SecA, SecYEG and auxiliary proteins SecDF. Other proteins may also be involved.

The protein localises to the cell inner membrane. Functionally, part of the Sec protein translocase complex. Interacts with the SecYEG preprotein conducting channel. SecDF uses the proton motive force (PMF) to complete protein translocation after the ATP-dependent function of SecA. In Dictyoglomus turgidum (strain DSM 6724 / Z-1310), this protein is Protein translocase subunit SecF.